Consider the following 173-residue polypeptide: Transcriptional regulator ERG homolog (173 aa).

The ETS DNA-binding region spans 1–84 (SGQIQLWQFL…HGKRYAYKFD (84 aa)).

It belongs to the ETS family.

The protein resides in the nucleus. Its function is as follows. Acts as a transcriptional activator. The chain is Transcriptional regulator ERG homolog (ERG) from Lytechinus variegatus (Green sea urchin).